Here is a 1886-residue protein sequence, read N- to C-terminus: Highly reducing polyketide synthase (1886 aa).

The Ketosynthase family 3 (KS3) domain maps to 11–434 (TQDVAIVGLS…GANAHAVLDD (424 aa)). Catalysis depends on for beta-ketoacyl synthase activity residues cysteine 182, histidine 317, and histidine 357. Residues 483-568 (FLFSGQDQQS…VNNDLANTKK (86 aa)) form a malonyl-CoA:ACP transacylase (MAT) domain region. The tract at residues 616–750 (RSLIGAPQPS…GLLSIEYESS (135 aa)) is N-terminal hotdog fold. The PKS/mFAS DH domain occupies 616 to 926 (RSLIGAPQPS…CTAISEATNP (311 aa)). Residues 618–924 (LIGAPQPSYG…LHCTAISEAT (307 aa)) form a dehydratase (DH) domain region. Catalysis depends on histidine 648, which acts as the Proton acceptor; for dehydratase activity. A C-terminal hotdog fold region spans residues 778 to 926 (HTTQSPKALY…CTAISEATNP (149 aa)). Aspartate 838 serves as the catalytic Proton donor; for dehydratase activity. The tract at residues 1169 to 1480 (GMLDEIYFEA…AGKHMGKVAL (312 aa)) is enoylreductase (ER) domain. The catalytic ketoreductase (KRc) domain stretch occupies residues 1503–1681 (ATYVLVGGFG…VSLDLGLMRD (179 aa)). Residues 1802-1879 (DVTDLVLEIL…DLVDKIVAKS (78 aa)) enclose the Carrier domain. Serine 1839 bears the O-(pantetheine 4'-phosphoryl)serine mark.

The protein operates within mycotoxin biosynthesis. Functionally, highly reducing polyketide synthase; part of the gene cluster that mediates the biosynthesis of the selective antifungal agent ascochitine, an o-quinone methide that plays a possible protective role against other microbial competitors in nature and is considered to be important for pathogenicity of legume-associated Didymella species. The pathway probably begins with the synthesis of a keto-aldehyde intermediate by the ascochitine non-reducing polyketide synthase pksAC from successive condensations of 4 malonyl-CoA units, presumably with a simple acetyl-CoA starter unit. Release of the keto-aldehyde intermediate is consistent with the presence of the C-terminal reductive release domain. The HR-PKS (orf7) probably makes a diketide starter unit which is passed to the non-reducing polyketide synthase pksAC for further extension, producing ascochital and ascochitine. The aldehyde dehydrogenase (orf1), the 2-oxoglutarate-dependent dioxygenase (orf3) and the dehydrogenase (orf9) are probably involved in subsequent oxidations of methyl groups to the carboxylic acid of the heterocyclic ring. The ascochitine gene cluster also includes a gene encoding a short peptide with a cupin domain (orf2) that is often found in secondary metabolite gene clusters and which function has still to be determined. The chain is Highly reducing polyketide synthase from Didymella fabae (Leaf and pod spot disease fungus).